Consider the following 306-residue polypeptide: Protein SEC13 homolog (306 aa).

6 WD repeats span residues 11–50 (QHRDAIHDAQLNIYGNRLATCGSDRLVKIFEVRPNGQSYP), 56–97 (GHNG…WQKT), 102–143 (THEA…QQWQ), 150–195 (CHDQ…NEWT), 202–245 (CHKD…TAEW), and 252–291 (QAPCALYHASFSPCGSFLSVSGDDNMITLWRENLQGQWIK).

Belongs to the WD repeat SEC13 family. As to quaternary structure, probably part of the GATOR complex.

The protein localises to the cytoplasmic vesicle. It localises to the COPII-coated vesicle membrane. Its subcellular location is the endoplasmic reticulum membrane. The protein resides in the nucleus. It is found in the nuclear pore complex. The protein localises to the lysosome membrane. In terms of biological role, functions as a component of the nuclear pore complex (NPC) and the COPII coat. Functionally, as a component of the GATOR complex may function in the amino acid-sensing branch of the TORC1 signaling pathway. This is Protein SEC13 homolog from Caenorhabditis briggsae.